The primary structure comprises 430 residues: Asparagine--tRNA ligase (430 aa).

The protein belongs to the class-II aminoacyl-tRNA synthetase family. In terms of assembly, homodimer.

The protein resides in the cytoplasm. The catalysed reaction is tRNA(Asn) + L-asparagine + ATP = L-asparaginyl-tRNA(Asn) + AMP + diphosphate + H(+). In Shouchella clausii (strain KSM-K16) (Alkalihalobacillus clausii), this protein is Asparagine--tRNA ligase.